An 81-amino-acid polypeptide reads, in one-letter code: Costars family protein ABRACL (81 aa).

At Met1 the chain carries N-acetylmethionine.

Belongs to the costars family.

The sequence is that of Costars family protein ABRACL (ABRACL) from Bos taurus (Bovine).